A 313-amino-acid chain; its full sequence is Pantothenate synthetase (313 aa).

43 to 50 (MGALHEGH) contacts ATP. Catalysis depends on His-50, which acts as the Proton donor. Gln-75 serves as a coordination point for (R)-pantoate. Residue Gln-75 participates in beta-alanine binding. 161–164 (GEKD) lines the ATP pocket. Residue Gln-167 coordinates (R)-pantoate. ATP-binding positions include Val-190 and 198–201 (LSSR).

Belongs to the pantothenate synthetase family. Homodimer.

The protein resides in the cytoplasm. It carries out the reaction (R)-pantoate + beta-alanine + ATP = (R)-pantothenate + AMP + diphosphate + H(+). It participates in cofactor biosynthesis; (R)-pantothenate biosynthesis; (R)-pantothenate from (R)-pantoate and beta-alanine: step 1/1. In terms of biological role, catalyzes the condensation of pantoate with beta-alanine in an ATP-dependent reaction via a pantoyl-adenylate intermediate. In Mycobacterium sp. (strain KMS), this protein is Pantothenate synthetase.